Reading from the N-terminus, the 373-residue chain is MTDNSNIRVVVGMSGGVDSSVTALLLKEQGYDVIGVFMKNWDDTDEFGVCTATEDYKDVAAVADQIGIPYYSVNFEKEYWDRVFEYFLAEYRAGRTPNPDVMCNKEIKFKAFLDYAMTLGADYVATGHYAQVTRDENGIVHMLRGADNNKDQTYFLSQLSQEQLQKTLFPLGHLQKPEVRRIAEEAGLATAKKKDSTGICFIGEKNFKDFLGQYLPAQPGRMMTVDGRDMGEHAGLMYYTIGQRGGLGIGGQHGGDNKPWFVVGKDLSKNILYVGQGFYHDSLMSTSLTASEIHFTRDMPNEFKLECTAKFRYRQPDSKVTVYVKGNQARVVFDDLQRAITPGQAVVFYNEQECLGGGMIDQAYRDDKICQYI.

Residues 12-19 (GMSGGVDS) and M38 contribute to the ATP site. An interaction with target base in tRNA region spans residues 98–100 (NPD). C103 serves as the catalytic Nucleophile. Cysteines 103 and 200 form a disulfide. An ATP-binding site is contributed by G127. The segment at 150–152 (KDQ) is interaction with tRNA. The active-site Cysteine persulfide intermediate is C200. The tract at residues 312 to 313 (RY) is interaction with tRNA.

This sequence belongs to the MnmA/TRMU family.

The protein resides in the cytoplasm. It catalyses the reaction S-sulfanyl-L-cysteinyl-[protein] + uridine(34) in tRNA + AH2 + ATP = 2-thiouridine(34) in tRNA + L-cysteinyl-[protein] + A + AMP + diphosphate + H(+). Its function is as follows. Catalyzes the 2-thiolation of uridine at the wobble position (U34) of tRNA, leading to the formation of s(2)U34. This chain is tRNA-specific 2-thiouridylase MnmA, found in Streptococcus agalactiae serotype III (strain NEM316).